Reading from the N-terminus, the 1043-residue chain is Probable inorganic carbon transporter subunit DabA (1043 aa).

Zn(2+) contacts are provided by Cys460, Asp462, His719, and Cys734.

It belongs to the inorganic carbon transporter (TC 9.A.2) DabA family. As to quaternary structure, forms a complex with DabB. It depends on Zn(2+) as a cofactor.

Its subcellular location is the cell inner membrane. Its function is as follows. Part of an energy-coupled inorganic carbon pump. In Thiobacillus denitrificans (strain ATCC 25259 / T1), this protein is Probable inorganic carbon transporter subunit DabA.